We begin with the raw amino-acid sequence, 198 residues long: Probable GTP-binding protein EngB (198 aa).

Positions 22-195 (DLPEIALAGR…WKAIHKMTKT (174 aa)) constitute an EngB-type G domain. Residues 30-37 (GRSNVGKS), 57-61 (GKTQT), 75-78 (DVPG), 142-145 (TKAD), and 174-176 (FSS) each bind GTP. 2 residues coordinate Mg(2+): Ser37 and Thr59.

This sequence belongs to the TRAFAC class TrmE-Era-EngA-EngB-Septin-like GTPase superfamily. EngB GTPase family. It depends on Mg(2+) as a cofactor.

Functionally, necessary for normal cell division and for the maintenance of normal septation. The chain is Probable GTP-binding protein EngB from Bacillus mycoides (strain KBAB4) (Bacillus weihenstephanensis).